A 159-amino-acid chain; its full sequence is NADH-quinone oxidoreductase subunit I (159 aa).

2 4Fe-4S ferredoxin-type domains span residues Arg-51 to Asp-80 and Thr-90 to Asn-119. Positions 60, 63, 66, 70, 99, 102, 105, and 109 each coordinate [4Fe-4S] cluster.

This sequence belongs to the complex I 23 kDa subunit family. As to quaternary structure, NDH-1 is composed of 14 different subunits. Subunits NuoA, H, J, K, L, M, N constitute the membrane sector of the complex. [4Fe-4S] cluster serves as cofactor.

It is found in the cell inner membrane. The enzyme catalyses a quinone + NADH + 5 H(+)(in) = a quinol + NAD(+) + 4 H(+)(out). Functionally, NDH-1 shuttles electrons from NADH, via FMN and iron-sulfur (Fe-S) centers, to quinones in the respiratory chain. The immediate electron acceptor for the enzyme in this species is believed to be ubiquinone. Couples the redox reaction to proton translocation (for every two electrons transferred, four hydrogen ions are translocated across the cytoplasmic membrane), and thus conserves the redox energy in a proton gradient. The polypeptide is NADH-quinone oxidoreductase subunit I (Rickettsia peacockii (strain Rustic)).